The following is a 201-amino-acid chain: Chromophore lyase CpcT/CpeT (201 aa).

It belongs to the CpcT/CpeT biliprotein lyase family.

It is found in the plastid. The protein localises to the organellar chromatophore. Covalently attaches a chromophore to Cys residue(s) of phycobiliproteins. This Paulinella chromatophora protein is Chromophore lyase CpcT/CpeT.